A 338-amino-acid chain; its full sequence is DNA-directed RNA polymerase subunit alpha (338 aa).

An alpha N-terminal domain (alpha-NTD) region spans residues 1–234; the sequence is MIQKNWQELI…DQLNVFVNFE (234 aa). The alpha C-terminal domain (alpha-CTD) stretch occupies residues 250–338; it reads FNPALLKKVD…ELAKRFEEHY (89 aa).

The protein belongs to the RNA polymerase alpha chain family. Homodimer. The RNAP catalytic core consists of 2 alpha, 1 beta, 1 beta' and 1 omega subunit. When a sigma factor is associated with the core the holoenzyme is formed, which can initiate transcription.

It catalyses the reaction RNA(n) + a ribonucleoside 5'-triphosphate = RNA(n+1) + diphosphate. DNA-dependent RNA polymerase catalyzes the transcription of DNA into RNA using the four ribonucleoside triphosphates as substrates. This chain is DNA-directed RNA polymerase subunit alpha, found in Beijerinckia indica subsp. indica (strain ATCC 9039 / DSM 1715 / NCIMB 8712).